The primary structure comprises 121 residues: Large ribosomal subunit protein uL18 (121 aa).

The protein belongs to the universal ribosomal protein uL18 family. In terms of assembly, part of the 50S ribosomal subunit; part of the 5S rRNA/L5/L18/L25 subcomplex. Contacts the 5S and 23S rRNAs.

This is one of the proteins that bind and probably mediate the attachment of the 5S RNA into the large ribosomal subunit, where it forms part of the central protuberance. This Desulfotalea psychrophila (strain LSv54 / DSM 12343) protein is Large ribosomal subunit protein uL18.